The following is a 181-amino-acid chain: Peptidyl-tRNA hydrolase (181 aa).

Residue Tyr14 participates in tRNA binding. His19 (proton acceptor) is an active-site residue. Tyr62, Asn64, and Asn108 together coordinate tRNA.

This sequence belongs to the PTH family. Monomer.

It is found in the cytoplasm. It catalyses the reaction an N-acyl-L-alpha-aminoacyl-tRNA + H2O = an N-acyl-L-amino acid + a tRNA + H(+). Hydrolyzes ribosome-free peptidyl-tRNAs (with 1 or more amino acids incorporated), which drop off the ribosome during protein synthesis, or as a result of ribosome stalling. Functionally, catalyzes the release of premature peptidyl moieties from peptidyl-tRNA molecules trapped in stalled 50S ribosomal subunits, and thus maintains levels of free tRNAs and 50S ribosomes. The polypeptide is Peptidyl-tRNA hydrolase (Campylobacter jejuni subsp. doylei (strain ATCC BAA-1458 / RM4099 / 269.97)).